The sequence spans 396 residues: NADH-quinone oxidoreductase subunit D 1 (396 aa).

It belongs to the complex I 49 kDa subunit family. In terms of assembly, NDH-1 is composed of 14 different subunits. Subunits NuoB, C, D, E, F, and G constitute the peripheral sector of the complex.

It localises to the cell inner membrane. It catalyses the reaction a quinone + NADH + 5 H(+)(in) = a quinol + NAD(+) + 4 H(+)(out). In terms of biological role, NDH-1 shuttles electrons from NADH, via FMN and iron-sulfur (Fe-S) centers, to quinones in the respiratory chain. The immediate electron acceptor for the enzyme in this species is believed to be ubiquinone. Couples the redox reaction to proton translocation (for every two electrons transferred, four hydrogen ions are translocated across the cytoplasmic membrane), and thus conserves the redox energy in a proton gradient. This chain is NADH-quinone oxidoreductase subunit D 1, found in Rhizobium etli (strain CIAT 652).